Reading from the N-terminus, the 510-residue chain is Probable lysosomal cobalamin transporter (510 aa).

Residues 1–21 traverse the membrane as a helical segment; it reads MFPISVGWIAFAGVLLTLIAL. Residues 22-40 lie on the Extracellular side of the membrane; sequence NYFIVKYYSDKHESGKITT. Residues 41–61 traverse the membrane as a helical segment; it reads IISVIGLTLTLLCVMLIPVDI. Topologically, residues 62–88 are cytoplasmic; that stretch reads LNVSTMSHSDGTQISPYSISQRTEGVK. The chain crosses the membrane as a helical span at residues 89–109; it reads MLYYILYGSILGVSLILVPFA. The Extracellular portion of the chain corresponds to 110–129; it reads YFYHEEYDENIPTCSRVYAG. A helical transmembrane segment spans residues 130-150; that stretch reads CKFTIFFILFTIILLVVGAFV. Residues 151–178 are Cytoplasmic-facing; sequence RPGSKPIDDQNVKDWINDEVLNQNAIES. The chain crosses the membrane as a helical span at residues 179–199; sequence SVLFAISCLTVLGFLVFAVYT. At 200–289 the chain is on the extracellular side; it reads SYGLSAFPIG…FRKILVIFRP (90 aa). The chain crosses the membrane as a helical span at residues 290 to 310; sequence FAFIFGFIFILVSLLIIISIV. Residues 311 to 345 are Cytoplasmic-facing; it reads LSLVDKISSSVCGSACGFLSTYPQLKNPFDIILTK. The chain crosses the membrane as a helical span at residues 346–366; sequence LAPYFPLDYIIIGGLIFFIYS. Residues 367 to 395 are Extracellular-facing; sequence CTLSGITRIGIRFLWINMFEFGYRKTFPQ. Residues 396–416 form a helical membrane-spanning segment; that stretch reads GLLLASVLLMLSNLCLNMQIV. The Cytoplasmic segment spans residues 417–465; the sequence is NLAPRYVMYGAQVYLNGTSVIPCTINAPTDLCIMSEIGLLTSRIQLGIS. Residues 466 to 486 traverse the membrane as a helical segment; that stretch reads FFGIVFYYGTWVIVATFILGL. Over 487 to 510 the chain is Extracellular; that stretch reads AVSIFKRRPSAALSYSGDSDEEEI.

Belongs to the LIMR family. LMBRD1 subfamily.

Its subcellular location is the lysosome membrane. Probable lysosomal cobalamin transporter. Required to export cobalamin from lysosomes allowing its conversion to cofactors. The protein is Probable lysosomal cobalamin transporter (lmbrd1) of Dictyostelium discoideum (Social amoeba).